We begin with the raw amino-acid sequence, 78 residues long: ATP synthase subunit c (78 aa).

Helical transmembrane passes span 12–32 and 54–74; these read IGAG…GHVV and FIGI…ALLL.

Belongs to the ATPase C chain family. In terms of assembly, F-type ATPases have 2 components, F(1) - the catalytic core - and F(0) - the membrane proton channel. F(1) has five subunits: alpha(3), beta(3), gamma(1), delta(1), epsilon(1). F(0) has four main subunits: a(1), b(1), b'(1) and c(10-14). The alpha and beta chains form an alternating ring which encloses part of the gamma chain. F(1) is attached to F(0) by a central stalk formed by the gamma and epsilon chains, while a peripheral stalk is formed by the delta, b and b' chains.

The protein resides in the cellular chromatophore membrane. F(1)F(0) ATP synthase produces ATP from ADP in the presence of a proton or sodium gradient. F-type ATPases consist of two structural domains, F(1) containing the extramembraneous catalytic core and F(0) containing the membrane proton channel, linked together by a central stalk and a peripheral stalk. During catalysis, ATP synthesis in the catalytic domain of F(1) is coupled via a rotary mechanism of the central stalk subunits to proton translocation. Its function is as follows. Key component of the F(0) channel; it plays a direct role in translocation across the membrane. A homomeric c-ring of between 10-14 subunits forms the central stalk rotor element with the F(1) delta and epsilon subunits. This is ATP synthase subunit c from Rhodobacter capsulatus (Rhodopseudomonas capsulata).